We begin with the raw amino-acid sequence, 260 residues long: DNA import protein CedA (260 aa).

The next 6 membrane-spanning stretches (helical) occupy residues 13–33 (LLASLTYFIGAAIYALPVPVY), 47–67 (IYVVVWNSIYLGVLLFLGELL), 110–130 (ALIQVVPFGALLTVITSALTF), 140–160 (IVYQYVAVFIATGVLFLSIPF), 169–189 (AFIGSGIVFYVGLPYLPQFLA), and 220–240 (IITSLVIGPVIYIFILVGFSM).

Forms a complex composed of CedA, CedA1 and CedA2.

The protein resides in the cell membrane. Functionally, part of the Ced system, which is involved in DNA import. The polypeptide is DNA import protein CedA (Sulfolobus acidocaldarius (strain ATCC 33909 / DSM 639 / JCM 8929 / NBRC 15157 / NCIMB 11770)).